The following is a 296-amino-acid chain: 4-diphosphocytidyl-2-C-methyl-D-erythritol kinase (296 aa).

Lysine 19 is a catalytic residue. Residue proline 102–serine 112 coordinates ATP. Aspartate 144 is an active-site residue.

The protein belongs to the GHMP kinase family. IspE subfamily.

The enzyme catalyses 4-CDP-2-C-methyl-D-erythritol + ATP = 4-CDP-2-C-methyl-D-erythritol 2-phosphate + ADP + H(+). The protein operates within isoprenoid biosynthesis; isopentenyl diphosphate biosynthesis via DXP pathway; isopentenyl diphosphate from 1-deoxy-D-xylulose 5-phosphate: step 3/6. Its function is as follows. Catalyzes the phosphorylation of the position 2 hydroxy group of 4-diphosphocytidyl-2C-methyl-D-erythritol. The sequence is that of 4-diphosphocytidyl-2-C-methyl-D-erythritol kinase from Burkholderia pseudomallei (strain 1710b).